The sequence spans 640 residues: MLRNQSVGNGVSKQASAKAATFSTINSTLAADDMFKRNFVSYLPLNNEDNDILFPSIKTIKFIEMLHGKKEFFKGQSIHSVLRDSAVFKKQMFYTLSHTLLNSISIQQINAEWQRHLKAFPFRSKGMSFQEYFNIWYYAIKQVILEGILQTINYILQNLDNDIYNKYIDWICTIGITPIVTLPKNKVTLTPLAKSISSRLIQEIIRNKQNFLLHILTQISSTSIADFTNINIYRNKSDGNITCLSNNKELEYFVYSAPYFINNQLLFTTPLAHLYSELNKHENLHRHRKMCQLLNTFPIKVLTTSKNSVDNKKILELIEREEKTSDAKKSLIKFLLNLSDSKSKIGITDSIEGFLQDITPSIIDQNKLLISKGNLQRRGQDNNDRDIRDIFKKQIIKCMEEQIQSQLDEIETLKTANRLFENKIKDMHSLINLSETSKHDFTLDSDIESLSLAKALNKVQSLPFTSVSIDDTRAVANSFFSQYIPDIEYADKKIDQLWETEYTRTFRLRKNVNNQGQEDSISYSNYTLELLLIPFMKHVLKLRHFELLPEEFLFLSLKEIMLAVYSNCKIKHYLRLIYIRQINELSHLIHTQKQSDLTLTPDLGSTNPEDFQYPQDDVASKLKRIRNSRHIQYIKRPEYL.

It belongs to the herpesviridae portal protein family. As to quaternary structure, homododecamerizes. Interacts with terminase subunits TRM1 and TRM3.

The protein localises to the virion. The protein resides in the host nucleus. In terms of biological role, forms a portal in the viral capsid through which viral DNA is translocated during DNA packaging. Assembles as a dodecamer at a single fivefold axe of the T=16 icosahedric capsid. Binds to the molecular motor that translocates the viral DNA, termed terminase. In Human herpesvirus 7 (strain JI) (HHV-7), this protein is Portal protein (U76).